Consider the following 151-residue polypeptide: Prolamin PPROL 14P (151 aa).

Positions 1 to 19 are cleaved as a signal peptide; sequence MKIIFVFALLAIAACSATA. Glutamine 20 is subject to Pyrrolidone carboxylic acid.

This sequence belongs to the prolamin family.

It localises to the vacuole. The protein localises to the aleurone grain. In terms of biological role, seed storage protein; serves as a source of nitrogen, carbon and sulfur for the young developing seedling. In Oryza sativa subsp. japonica (Rice), this protein is Prolamin PPROL 14P (PROLM20).